Reading from the N-terminus, the 287-residue chain is Protease HtpX (287 aa).

Helical transmembrane passes span 4 to 24 (IFLL…VMSI) and 33 to 53 (GGLL…SLAI). H139 lines the Zn(2+) pocket. The active site involves E140. H143 provides a ligand contact to Zn(2+). The next 2 membrane-spanning stretches (helical) occupy residues 154 to 174 (LIQG…AGII) and 195 to 215 (AVVF…VAYF). Residue E220 participates in Zn(2+) binding.

Belongs to the peptidase M48B family. It depends on Zn(2+) as a cofactor.

The protein localises to the cell inner membrane. This is Protease HtpX from Shewanella baltica (strain OS185).